The primary structure comprises 474 residues: PRAME family member 10 (474 aa).

Residues 97 to 124 (RWKLQVLDLRDVDENFWTIWSGARVLSC) form an LRR 1; degenerate repeat. The stretch at 179–203 (HLCCSKVQNYSMPTSSFRNLLERIY) is one LRR 2; degenerate repeat. The stretch at 204 to 230 (PDSIQELEVWKKCSLNKTGKFAPYLSQ) is one LRR 3; degenerate repeat. The stretch at 231–265 (MSNLRELFLAFGYERELYVSVQWPCIPDLDSPFLC) is one LRR 4; degenerate repeat. 5 LRR repeats span residues 266 to 291 (LYYPQMLYIKKISNIKEHLEHLLRYL), 292 to 323 (KNPLGAFIFSDAYLTDRDMECLSQYPSLSQLK), 324 to 342 (ELRLIHILMWTTNLEPLGV), 348 to 375 (AATLKTLVLKDCRIQDPQLRVLLPALSH), and 376 to 400 (CSQLTTFNFHGNETSMNALKDLLRH).

The protein belongs to the PRAME family.

The chain is PRAME family member 10 from Homo sapiens (Human).